A 185-amino-acid polypeptide reads, in one-letter code: Peptide deformylase (185 aa).

2 residues coordinate Fe cation: C94 and H136. Residue E137 is part of the active site. H140 contributes to the Fe cation binding site.

This sequence belongs to the polypeptide deformylase family. Fe(2+) serves as cofactor.

The catalysed reaction is N-terminal N-formyl-L-methionyl-[peptide] + H2O = N-terminal L-methionyl-[peptide] + formate. Removes the formyl group from the N-terminal Met of newly synthesized proteins. Requires at least a dipeptide for an efficient rate of reaction. N-terminal L-methionine is a prerequisite for activity but the enzyme has broad specificity at other positions. The protein is Peptide deformylase of Chlorobium phaeobacteroides (strain BS1).